A 379-amino-acid polypeptide reads, in one-letter code: Structure-specific endonuclease subunit EME2 (379 aa).

The disordered stretch occupies residues 1–55 (MARVGPGRAGVSCQGRGRGRGGSGQRRPPTWEISDSDAEDSAGSEAAARARDPAG). A nuclease-like domain; forms the post-nick DNA binding interface and is involved in DNA recognition and bending region spans residues 50–266 (ARDPAGERRA…YPLKQYRESQ (217 aa)). The segment at 288–379 (GLQAAWRRQI…NPDLLLDLGS (92 aa)) is helix-hairpin-helix (2HhH); forms the pre-nick DNA binding interface and is involved in DNA recognition and bending.

The protein belongs to the EME1/MMS4 family. In terms of assembly, part of the heterodimeric MUS81-EME2 complex; the complex forms specifically during the DNA replication phase of the cell cycle.

The protein localises to the nucleus. Its function is as follows. Non-catalytic subunit of the structure-specific, heterodimeric DNA endonuclease MUS81-EME2 which is involved in the maintenance of genome stability. In the complex, EME2 is required for DNA cleavage, participating in DNA recognition and bending. MUS81-EME2 cleaves 3'-flaps and nicked Holliday junctions, and exhibit limited endonuclease activity with 5' flaps and nicked double-stranded DNAs. MUS81-EME2 which is active during the replication of DNA is more specifically involved in replication fork processing. Replication forks frequently encounter obstacles to their passage, including DNA base lesions, DNA interstrand cross-links, difficult-to-replicate sequences, transcription bubbles, or tightly bound proteins. One mechanism for the restart of a stalled replication fork involves nucleolytic cleavage mediated by the MUS81-EME2 endonuclease. By acting upon the stalled fork, MUS81-EME2 generates a DNA double-strand break (DSB) that can be repaired by homologous recombination, leading to the restoration of an active fork. MUS81-EME2 could also function in telomere maintenance. The protein is Structure-specific endonuclease subunit EME2 of Homo sapiens (Human).